The primary structure comprises 108 residues: ATP-dependent Clp protease adapter protein ClpS (108 aa).

This sequence belongs to the ClpS family. In terms of assembly, binds to the N-terminal domain of the chaperone ClpA.

In terms of biological role, involved in the modulation of the specificity of the ClpAP-mediated ATP-dependent protein degradation. This chain is ATP-dependent Clp protease adapter protein ClpS, found in Leptospira borgpetersenii serovar Hardjo-bovis (strain JB197).